The chain runs to 216 residues: Probable transaldolase (216 aa).

Residue Lys-83 is the Schiff-base intermediate with substrate of the active site.

This sequence belongs to the transaldolase family. Type 3B subfamily.

Its subcellular location is the cytoplasm. The enzyme catalyses D-sedoheptulose 7-phosphate + D-glyceraldehyde 3-phosphate = D-erythrose 4-phosphate + beta-D-fructose 6-phosphate. Its pathway is carbohydrate degradation; pentose phosphate pathway; D-glyceraldehyde 3-phosphate and beta-D-fructose 6-phosphate from D-ribose 5-phosphate and D-xylulose 5-phosphate (non-oxidative stage): step 2/3. Transaldolase is important for the balance of metabolites in the pentose-phosphate pathway. This chain is Probable transaldolase, found in Sphingopyxis alaskensis (strain DSM 13593 / LMG 18877 / RB2256) (Sphingomonas alaskensis).